A 711-amino-acid chain; its full sequence is Myb-like protein B (711 aa).

Low complexity predominate over residues 24–50; that stretch reads QPQQSIQQQQQQQQQQQQQQQQQQQQQ. 2 disordered regions span residues 24–70 and 113–235; these read QPQQ…SPQL and NYHT…IINN. Composition is skewed to polar residues over residues 113–139 and 148–157; these read NYHT…SPPT and TPLSSSTGFS. Composition is skewed to low complexity over residues 158 to 187 and 198 to 235; these read NNNN…NNNI and NNYP…IINN. HTH myb-type domains follow at residues 428–490 and 491–542; these read RESI…SPEI and KKGS…SRQT. 2 DNA-binding regions (H-T-H motif) span residues 462 to 486 and 514 to 538; these read WKKI…KRVL and WKNV…KAIM. Residues 540-598 enclose the Myb-like domain; the sequence is RQTEWNQLEDDILTKKIKLMTQNNEKISFQQVSKHLARAKTTKIPRTALECKSRWSQLN. Residues 598 to 640 form a disordered region; sequence NSTNVNNNNNNNNNSITTSSSNTNQQQQSTMVTPTSSPLSSPI.

The protein localises to the nucleus. Its function is as follows. Transcriptional activator that initiates multicellular development by induction of adenylyl cyclase expression. This is Myb-like protein B (mybB) from Dictyostelium discoideum (Social amoeba).